Reading from the N-terminus, the 229-residue chain is Ribonuclease 3 (229 aa).

The region spanning 5-136 is the RNase III domain; it reads LAELERALGI…VIGAIYLDQG (132 aa). Position 49 (glutamate 49) interacts with Mg(2+). Aspartate 53 is a catalytic residue. Positions 122 and 125 each coordinate Mg(2+). The active site involves glutamate 125. The DRBM domain maps to 161-229; sequence DPTTRLQEIV…AQAALADIDR (69 aa).

Belongs to the ribonuclease III family. As to quaternary structure, homodimer. The cofactor is Mg(2+).

The protein resides in the cytoplasm. The catalysed reaction is Endonucleolytic cleavage to 5'-phosphomonoester.. In terms of biological role, digests double-stranded RNA. Involved in the processing of primary rRNA transcript to yield the immediate precursors to the large and small rRNAs (23S and 16S). Processes some mRNAs, and tRNAs when they are encoded in the rRNA operon. Processes pre-crRNA and tracrRNA of type II CRISPR loci if present in the organism. In Chloroflexus aggregans (strain MD-66 / DSM 9485), this protein is Ribonuclease 3.